Reading from the N-terminus, the 329-residue chain is DNA-directed RNA polymerase subunit alpha (329 aa).

The interval 1 to 235 (MQGSVTEFLK…EQLDAFVDLR (235 aa)) is alpha N-terminal domain (alpha-NTD). The segment at 249–329 (FDPILLRPVD…NWPPASIAED (81 aa)) is alpha C-terminal domain (alpha-CTD).

Belongs to the RNA polymerase alpha chain family. As to quaternary structure, homodimer. The RNAP catalytic core consists of 2 alpha, 1 beta, 1 beta' and 1 omega subunit. When a sigma factor is associated with the core the holoenzyme is formed, which can initiate transcription.

It catalyses the reaction RNA(n) + a ribonucleoside 5'-triphosphate = RNA(n+1) + diphosphate. Its function is as follows. DNA-dependent RNA polymerase catalyzes the transcription of DNA into RNA using the four ribonucleoside triphosphates as substrates. The polypeptide is DNA-directed RNA polymerase subunit alpha (Pasteurella multocida (strain Pm70)).